Reading from the N-terminus, the 563-residue chain is uncharacterized protein (563 aa).

This sequence belongs to the HyuB family.

This is an uncharacterized protein from Methanocaldococcus jannaschii (strain ATCC 43067 / DSM 2661 / JAL-1 / JCM 10045 / NBRC 100440) (Methanococcus jannaschii).